We begin with the raw amino-acid sequence, 285 residues long: Sulfotransferase 2A2 (285 aa).

Residues K44, S45, G46, T47, N48, and W49 each contribute to the 3'-phosphoadenylyl sulfate site. Residue H99 is the Proton acceptor of the active site. R121, S129, Y184, S218, M223, R247, K248, and G249 together coordinate 3'-phosphoadenylyl sulfate.

The protein belongs to the sulfotransferase 1 family.

It is found in the cytoplasm. It catalyses the reaction an alcohol + 3'-phosphoadenylyl sulfate = an alkyl sulfate + adenosine 3',5'-bisphosphate + H(+). Functionally, sulfotransferase that utilizes 3'-phospho-5'-adenylyl sulfate (PAPS) as sulfonate donor to catalyze the sulfate conjugation of a potential wide variety of acceptor molecules bearing a hydroxyl group. Sulfonation increases the water solubility of most compounds, and therefore their renal excretion, but it can also result in bioactivation to form active metabolites. The sequence is that of Sulfotransferase 2A2 from Mus musculus (Mouse).